The following is a 242-amino-acid chain: MSKRRLAPLTFLRRLLFRTLVALVVFWGGGIALFSVVPVPFSAVMAERQISAWLSGEFGYVAHSDWVSMEDISPWMGLAVMAAEDQKFPEHWGFDVLAIEKALAHNERNESRIRGASTLSQQTVKNLFLWDGRSWVRKGLEAGLTLGIETVWSKKRILTVYLNIAEFGDGIFGVEAAARRYFNKPASRLNMTEAALLAAVLPNPLRYKADAPSGYVRSRQSWILRQMRQLGGESFMTRNQLY.

Residues 21 to 41 (VALVVFWGGGIALFSVVPVPF) form a helical membrane-spanning segment.

The protein belongs to the glycosyltransferase 51 family.

It is found in the cell inner membrane. The catalysed reaction is [GlcNAc-(1-&gt;4)-Mur2Ac(oyl-L-Ala-gamma-D-Glu-L-Lys-D-Ala-D-Ala)](n)-di-trans,octa-cis-undecaprenyl diphosphate + beta-D-GlcNAc-(1-&gt;4)-Mur2Ac(oyl-L-Ala-gamma-D-Glu-L-Lys-D-Ala-D-Ala)-di-trans,octa-cis-undecaprenyl diphosphate = [GlcNAc-(1-&gt;4)-Mur2Ac(oyl-L-Ala-gamma-D-Glu-L-Lys-D-Ala-D-Ala)](n+1)-di-trans,octa-cis-undecaprenyl diphosphate + di-trans,octa-cis-undecaprenyl diphosphate + H(+). It participates in cell wall biogenesis; peptidoglycan biosynthesis. In terms of biological role, peptidoglycan polymerase that catalyzes glycan chain elongation from lipid-linked precursors. This Salmonella arizonae (strain ATCC BAA-731 / CDC346-86 / RSK2980) protein is Biosynthetic peptidoglycan transglycosylase.